The chain runs to 536 residues: Probable monofunctional riboflavin biosynthesis protein RIBA 3, chloroplastic (536 aa).

The N-terminal 43 residues, 1–43 (MDRVLLSSQLSSQTVVNTRVQQGSGGINSIGFAVIRKGSLKLR), are a transit peptide targeting the chloroplast. Residues 44–310 (CYAIGGLGGG…IADLIRYRRK (267 aa)) are inactive DHBP synthase. Residues 133–134 (GD), Asp-138, and 248–252 (RAGHT) each bind D-ribulose 5-phosphate. Positions 311–536 (REKLVELIAV…GDQDEDDTHN (226 aa)) are GTP cyclohydrolase II. A GTP-binding site is contributed by 361 to 365 (RVHSE). Residues Cys-366, Cys-377, and Cys-379 each coordinate Zn(2+). Residues Gln-382, 405–407 (EGR), and Thr-427 each bind GTP. Residue Asp-439 is the Proton acceptor; for GTP cyclohydrolase activity of the active site. The active-site Nucleophile; for GTP cyclohydrolase activity is the Arg-441. GTP-binding residues include Thr-462 and Lys-467. The interval 507-536 (YGSDLPGNVPEEFLNPDDIAGDQDEDDTHN) is disordered. The segment covering 525–536 (IAGDQDEDDTHN) has biased composition (acidic residues).

The protein in the N-terminal section; belongs to the DHBP synthase family. It in the C-terminal section; belongs to the GTP cyclohydrolase II family. It depends on Zn(2+) as a cofactor.

It localises to the plastid. The protein resides in the chloroplast. The enzyme catalyses GTP + 4 H2O = 2,5-diamino-6-hydroxy-4-(5-phosphoribosylamino)-pyrimidine + formate + 2 phosphate + 3 H(+). The protein operates within cofactor biosynthesis; riboflavin biosynthesis; 5-amino-6-(D-ribitylamino)uracil from GTP: step 1/4. Involved in riboflavin biosynthesis. Catalyzes the conversion of GTP to 2,5-diamino-6-ribosylamino-4(3H)-pyrimidinone 5'-phosphate (DARP), formate and pyrophosphate. The sequence is that of Probable monofunctional riboflavin biosynthesis protein RIBA 3, chloroplastic (RIBA3) from Oryza sativa subsp. japonica (Rice).